Consider the following 416-residue polypeptide: Gamma-glutamyl phosphate reductase (416 aa).

Belongs to the gamma-glutamyl phosphate reductase family.

The protein resides in the cytoplasm. It carries out the reaction L-glutamate 5-semialdehyde + phosphate + NADP(+) = L-glutamyl 5-phosphate + NADPH + H(+). Its pathway is amino-acid biosynthesis; L-proline biosynthesis; L-glutamate 5-semialdehyde from L-glutamate: step 2/2. Functionally, catalyzes the NADPH-dependent reduction of L-glutamate 5-phosphate into L-glutamate 5-semialdehyde and phosphate. The product spontaneously undergoes cyclization to form 1-pyrroline-5-carboxylate. In Salmonella schwarzengrund (strain CVM19633), this protein is Gamma-glutamyl phosphate reductase.